The following is a 448-amino-acid chain: L-seryl-tRNA(Sec) selenium transferase (448 aa).

Lys-284 is modified (N6-(pyridoxal phosphate)lysine).

This sequence belongs to the SelA family. Pyridoxal 5'-phosphate serves as cofactor.

The protein localises to the cytoplasm. It catalyses the reaction L-seryl-tRNA(Sec) + selenophosphate + H(+) = L-selenocysteinyl-tRNA(Sec) + phosphate. The protein operates within aminoacyl-tRNA biosynthesis; selenocysteinyl-tRNA(Sec) biosynthesis; selenocysteinyl-tRNA(Sec) from L-seryl-tRNA(Sec) (bacterial route): step 1/1. Functionally, converts seryl-tRNA(Sec) to selenocysteinyl-tRNA(Sec) required for selenoprotein biosynthesis. The chain is L-seryl-tRNA(Sec) selenium transferase from Nautilia profundicola (strain ATCC BAA-1463 / DSM 18972 / AmH).